Here is a 256-residue protein sequence, read N- to C-terminus: Pyrroloquinoline-quinone synthase (256 aa).

This sequence belongs to the PqqC family.

It catalyses the reaction 6-(2-amino-2-carboxyethyl)-7,8-dioxo-1,2,3,4,7,8-hexahydroquinoline-2,4-dicarboxylate + 3 O2 = pyrroloquinoline quinone + 2 H2O2 + 2 H2O + H(+). It participates in cofactor biosynthesis; pyrroloquinoline quinone biosynthesis. Functionally, ring cyclization and eight-electron oxidation of 3a-(2-amino-2-carboxyethyl)-4,5-dioxo-4,5,6,7,8,9-hexahydroquinoline-7,9-dicarboxylic-acid to PQQ. In Rhizobium meliloti (strain 1021) (Ensifer meliloti), this protein is Pyrroloquinoline-quinone synthase.